The sequence spans 235 residues: Acyl-protein thioesterase 1 (235 aa).

Residues Ser-119, Asp-172, and His-206 each act as charge relay system in the active site.

This sequence belongs to the AB hydrolase superfamily. AB hydrolase 2 family.

The protein localises to the cytoplasm. The protein resides in the nucleus. It carries out the reaction S-hexadecanoyl-L-cysteinyl-[protein] + H2O = L-cysteinyl-[protein] + hexadecanoate + H(+). Functionally, hydrolyzes fatty acids from S-acylated cysteine residues in proteins with a strong preference for palmitoylated G-alpha proteins over other acyl substrates. Mediates the deacylation of G-alpha proteins such as GPA1 in vivo, but has weak or no activity toward palmitoylated Ras proteins. Has weak lysophospholipase activity in vitro; however such activity may not exist in vivo. In Eremothecium gossypii (strain ATCC 10895 / CBS 109.51 / FGSC 9923 / NRRL Y-1056) (Yeast), this protein is Acyl-protein thioesterase 1.